A 523-amino-acid polypeptide reads, in one-letter code: Sensory neuron membrane protein 1 (523 aa).

The Cytoplasmic segment spans residues 1–11; that stretch reads MQLPKELKYAA. A helical membrane pass occupies residues 12 to 32; it reads IAGGVALFGLIFGWVLFPTIL. Over 33–458 the chain is Extracellular; the sequence is KSQLKKEMAL…HQLFIPKRVV (426 aa). 2 N-linked (GlcNAc...) asparagine glycosylation sites follow: asparagine 67 and asparagine 229. Disulfide bonds link cysteine 268–cysteine 333, cysteine 297–cysteine 352, and cysteine 335–cysteine 341. Residue asparagine 440 is glycosylated (N-linked (GlcNAc...) asparagine). Residues 459–479 traverse the membrane as a helical segment; that stretch reads GVLRWWVVSFGSLGAVIGIVF. Topologically, residues 480 to 523 are cytoplasmic; that stretch reads HFRDHIMRLAVSGDTKVSKVTPEEPEQKDISVIGQAQEPAKVNI.

It belongs to the CD36 family. Detected in sensory neurons in the antenna.

The protein localises to the cell membrane. Plays an olfactory role that is not restricted to pheromone sensitivity. The polypeptide is Sensory neuron membrane protein 1 (Heliothis virescens (Tobacco budworm moth)).